A 151-amino-acid chain; its full sequence is ALK and LTK ligand 2 (151 aa).

Positions 1 to 25 are cleaved as a signal peptide; the sequence is MRVSGRPMLLALLLLLSTVGDPGHA. Disulfide bonds link C112–C148 and C126–C135.

This sequence belongs to the ALKAL family. In terms of assembly, homodimer.

Its subcellular location is the secreted. The protein resides in the cell membrane. Its function is as follows. Cytokine that acts as a physiological ligand for receptor tyrosine kinases LTK and ALK, leading to their activation. Cytokine-binding is sufficient to activate LTK. In contrast, ALKAL2-driven activation of ALK is coupled with heparin-binding to ALK. Stimulation of ALK signaling is involved in neural development and regulation of energy expenditure. The polypeptide is ALK and LTK ligand 2 (Rattus norvegicus (Rat)).